A 568-amino-acid polypeptide reads, in one-letter code: MADNKTTTIEPINRRSANITQGKSRAPNRSMYYAMGYVEGDFVKPMVGVANGHSTITPCNSGLQKLTDAAIEGIEEAGGNAQVFGTPTISDGMAMGTEGMKYSLVSREVISDCIETCVSGQWLDGVLVVGGCDKNMPGGLMGMLRANVPAIYVYGGTILPGHYQGRELNIVSVFEAVGENAAGKLSDHDLREIEKRAIPGTGSCGGMYTANTMSSAFEALGISLPYSSTMANPHDEKTNSAKASAKVLIEAIRNDLKPRDIVTRKAIENAVAVIMATGGSTNAVLHFLAIAHAAGVPWSIDDFERVRQKTPVLCDLKPSGKYLAVDLHRAGGIPQVMKLLLNAGLLHGDCITIEGKTMAQVLKDVPDRPRADQNVIRPIDQPLYAQGHLAILKGNLSPEGAVAKITGLKNPVITGPARVFDDEQSALQAILDGKIQAGDVMVLRYLGPKGGPGMPEMLAPTGALIGAGLGESVGLITDGRFSGGTWGMVVGHVAPEAAAGGTIAFVHEGDSITIDARQLLLQLNVAEAEIARRRARWTAPAARYTRGVQAKFAFNASSASQGAVLDAY.

Cysteine 59 is a [2Fe-2S] cluster binding site. Aspartate 91 provides a ligand contact to Mg(2+). A [2Fe-2S] cluster-binding site is contributed by cysteine 132. Positions 133 and 134 each coordinate Mg(2+). Lysine 134 carries the N6-carboxylysine modification. Cysteine 204 is a binding site for [2Fe-2S] cluster. Glutamate 456 contributes to the Mg(2+) binding site. The active-site Proton acceptor is the serine 482.

Belongs to the IlvD/Edd family. In terms of assembly, homodimer. The cofactor is [2Fe-2S] cluster. It depends on Mg(2+) as a cofactor.

It carries out the reaction (2R)-2,3-dihydroxy-3-methylbutanoate = 3-methyl-2-oxobutanoate + H2O. The enzyme catalyses (2R,3R)-2,3-dihydroxy-3-methylpentanoate = (S)-3-methyl-2-oxopentanoate + H2O. Its pathway is amino-acid biosynthesis; L-isoleucine biosynthesis; L-isoleucine from 2-oxobutanoate: step 3/4. It participates in amino-acid biosynthesis; L-valine biosynthesis; L-valine from pyruvate: step 3/4. Functionally, functions in the biosynthesis of branched-chain amino acids. Catalyzes the dehydration of (2R,3R)-2,3-dihydroxy-3-methylpentanoate (2,3-dihydroxy-3-methylvalerate) into 2-oxo-3-methylpentanoate (2-oxo-3-methylvalerate) and of (2R)-2,3-dihydroxy-3-methylbutanoate (2,3-dihydroxyisovalerate) into 2-oxo-3-methylbutanoate (2-oxoisovalerate), the penultimate precursor to L-isoleucine and L-valine, respectively. The protein is Dihydroxy-acid dehydratase of Verminephrobacter eiseniae (strain EF01-2).